Consider the following 206-residue polypeptide: Small ribosomal subunit protein uS4 (206 aa).

The S4 RNA-binding domain occupies 98–161 (RRLDNVVYRL…RSMELIKNNL (64 aa)).

It belongs to the universal ribosomal protein uS4 family. In terms of assembly, part of the 30S ribosomal subunit. Contacts protein S5. The interaction surface between S4 and S5 is involved in control of translational fidelity.

One of the primary rRNA binding proteins, it binds directly to 16S rRNA where it nucleates assembly of the body of the 30S subunit. In terms of biological role, with S5 and S12 plays an important role in translational accuracy. In Caldanaerobacter subterraneus subsp. tengcongensis (strain DSM 15242 / JCM 11007 / NBRC 100824 / MB4) (Thermoanaerobacter tengcongensis), this protein is Small ribosomal subunit protein uS4.